The following is a 379-amino-acid chain: Protein RecA (379 aa).

The disordered stretch occupies residues 1 to 23 (MSVDVKSAQSSKSDSLQVEPRPG). The segment covering 7 to 16 (SAQSSKSDSL) has biased composition (polar residues). 84-91 (GPESSGKT) lines the ATP pocket.

Belongs to the RecA family.

It localises to the cytoplasm. Functionally, can catalyze the hydrolysis of ATP in the presence of single-stranded DNA, the ATP-dependent uptake of single-stranded DNA by duplex DNA, and the ATP-dependent hybridization of homologous single-stranded DNAs. It interacts with LexA causing its activation and leading to its autocatalytic cleavage. In Prochlorococcus marinus (strain MIT 9313), this protein is Protein RecA.